The sequence spans 586 residues: A-type ATP synthase subunit A (586 aa).

232–239 is an ATP binding site; that stretch reads GPFGSGKT.

This sequence belongs to the ATPase alpha/beta chains family. Has multiple subunits with at least A(3), B(3), C, D, E, F, H, I and proteolipid K(x).

The protein localises to the cell membrane. The enzyme catalyses ATP + H2O + 4 H(+)(in) = ADP + phosphate + 5 H(+)(out). Functionally, component of the A-type ATP synthase that produces ATP from ADP in the presence of a proton gradient across the membrane. The A chain is the catalytic subunit. The protein is A-type ATP synthase subunit A of Methanococcus maripaludis (strain C7 / ATCC BAA-1331).